Here is a 257-residue protein sequence, read N- to C-terminus: Small ribosomal subunit protein uS3 (257 aa).

Positions 39-112 (IRKFLNKKYN…EIVFNVVEVR (74 aa)) constitute a KH type-2 domain. The segment at 217 to 257 (HEELRKERQSSASSNHGGGKRRPSRKGPRRSQEDAATEGGN) is disordered. The segment covering 234–245 (GGKRRPSRKGPR) has biased composition (basic residues).

The protein belongs to the universal ribosomal protein uS3 family. Part of the 30S ribosomal subunit. Forms a tight complex with proteins S10 and S14.

Its function is as follows. Binds the lower part of the 30S subunit head. Binds mRNA in the 70S ribosome, positioning it for translation. This chain is Small ribosomal subunit protein uS3, found in Haploplasma axanthum (Acholeplasma axanthum).